Consider the following 318-residue polypeptide: NLP effector protein 9 (318 aa).

A signal peptide spans 1 to 19 (MRLFAFLWSSVAFLSTVQA). Over residues 24-35 (TASQTQDDSSTP) the composition is skewed to low complexity. Disordered stretches follow at residues 24–43 (TASQTQDDSSTPTPTPPDKY) and 50–93 (LRTK…PAPT). Positions 55 to 65 (PMATPNRTIMP) are enriched in polar residues. Asn-60 carries N-linked (GlcNAc...) asparagine glycosylation. Positions 73–93 (PEPPTPEPTYLPTLSPTPAPT) are enriched in pro residues. A Conserved undecapeptide motif I motif is present at residues 185 to 195 (AIMYSWYFPKD). The Hepta-peptide GHRHDWE motif II motif lies at 202 to 208 (GHRHDWE).

This sequence belongs to the Necrosis inducing protein (NPP1) family.

The protein resides in the secreted. Secreted effector that contributes to virulence during infection by P.capsici. Induces distinct chlorosis at 3 days after inoculation of host C.annuum leaves, and all the chlorotic areas gradually turn brown and become moderately necrotic at 7 days after inoculation. Caused only small necrotic areas at 7 days after non-host N.benthamiana leaves infection. This is NLP effector protein 9 from Phytophthora capsici.